Consider the following 541-residue polypeptide: AT-rich interactive domain-containing protein 3A (541 aa).

Residues 17 to 172 (RLQQELEARQ…KHPNPQAFPT (156 aa)) are disordered. Positions 55-73 (LKIQRAQAAALAAMRAAAA) are enriched in low complexity. Over residues 84–102 (SDEEEEDGESMASDEEDEK) the composition is skewed to acidic residues. The segment covering 103–112 (ERDGESERYP) has biased composition (basic and acidic residues). Residues 115–144 (GSEEEDLKGKWDEDDFEDEGEEDDYEDMEE) show a composition bias toward acidic residues. The ARID domain maps to 212-304 (DPKRKEFLDD…YLYPYECEKR (93 aa)). One can recognise an REKLES domain in the interval 407-501 (AALEQLREKL…GVLFAQPPTS (95 aa)). The interval 408 to 450 (ALEQLREKLESGEPPEKKMALGTEEQQRLQRAIQHNLLAMTAQ) is important for nuclear localization. The interval 452-473 (PMNIRINSQAEGRQDSAVNLTT) is homodimerization. An important for cytoplasmic localization region spans residues 497–504 (QPPTSASG). A disordered region spans residues 499–541 (PTSASGTSKGSSNRTGSIGGGSSTSQAAPPPAPSAPTSNNPSP).

As to quaternary structure, homodimer.

The protein localises to the nucleus. The protein resides in the cytoplasm. In terms of biological role, transcription factor required for smad1 and smad2-mediated responses to TGFbeta during mesoderm induction. The chain is AT-rich interactive domain-containing protein 3A (arid3a) from Xenopus tropicalis (Western clawed frog).